Here is a 479-residue protein sequence, read N- to C-terminus: (R)-1-hydroxy-2-aminoethylphosphonate ammonia-lyase (479 aa).

Lys317 bears the N6-(pyridoxal phosphate)lysine mark.

The protein belongs to the class-III pyridoxal-phosphate-dependent aminotransferase family. Pyridoxal 5'-phosphate is required as a cofactor.

It catalyses the reaction (1R)-(2-amino-1-hydroxyethyl)phosphonate = phosphonoacetaldehyde + NH4(+). In terms of biological role, involved in phosphonate degradation. Functions as a lyase that catalyzes an elimination reaction on the naturally occurring compound (R)-1-hydroxy-2-aminoethylphosphonate ((R)-HAEP), releasing ammonia and generating phosphonoacetaldehyde (PAA), which can be then hydrolyzed by PhnX, encoded by an adjacent gene. Thus, catalyzes a reaction that serves to funnel (R)-HAEP into the hydrolytic pathway for aminoethylphosphonate (AEP, the most common biogenic phosphonate) degradation, expanding the scope and the usefulness of the pathway itself. Is not active toward the (S) enantiomer of HAEP or other HAEP-related compounds such as ethanolamine and D,L-isoserine, indicating a very high substrate specificity. The chain is (R)-1-hydroxy-2-aminoethylphosphonate ammonia-lyase from Vibrio splendidus (strain 12B01).